Here is a 466-residue protein sequence, read N- to C-terminus: Ribulose bisphosphate carboxylase large chain (466 aa).

Lys-5 is subject to N6,N6,N6-trimethyllysine. Substrate is bound by residues Asn-114 and Thr-164. Lys-166 functions as the Proton acceptor in the catalytic mechanism. Lys-168 is a substrate binding site. 3 residues coordinate Mg(2+): Lys-192, Asp-194, and Glu-195. The residue at position 192 (Lys-192) is an N6-carboxylysine. His-285 functions as the Proton acceptor in the catalytic mechanism. Positions 286, 318, and 370 each coordinate substrate.

Belongs to the RuBisCO large chain family. Type I subfamily. Heterohexadecamer of 8 large chains and 8 small chains; disulfide-linked. The disulfide link is formed within the large subunit homodimers. Requires Mg(2+) as cofactor. The disulfide bond which can form in the large chain dimeric partners within the hexadecamer appears to be associated with oxidative stress and protein turnover.

The protein localises to the plastid. Its subcellular location is the chloroplast. It catalyses the reaction 2 (2R)-3-phosphoglycerate + 2 H(+) = D-ribulose 1,5-bisphosphate + CO2 + H2O. It carries out the reaction D-ribulose 1,5-bisphosphate + O2 = 2-phosphoglycolate + (2R)-3-phosphoglycerate + 2 H(+). RuBisCO catalyzes two reactions: the carboxylation of D-ribulose 1,5-bisphosphate, the primary event in carbon dioxide fixation, as well as the oxidative fragmentation of the pentose substrate in the photorespiration process. Both reactions occur simultaneously and in competition at the same active site. The polypeptide is Ribulose bisphosphate carboxylase large chain (Silene gallica (Common catchfly)).